Reading from the N-terminus, the 82-residue chain is Exodeoxyribonuclease 7 small subunit (82 aa).

This sequence belongs to the XseB family. In terms of assembly, heterooligomer composed of large and small subunits.

The protein localises to the cytoplasm. The catalysed reaction is Exonucleolytic cleavage in either 5'- to 3'- or 3'- to 5'-direction to yield nucleoside 5'-phosphates.. Functionally, bidirectionally degrades single-stranded DNA into large acid-insoluble oligonucleotides, which are then degraded further into small acid-soluble oligonucleotides. This is Exodeoxyribonuclease 7 small subunit from Pectobacterium atrosepticum (strain SCRI 1043 / ATCC BAA-672) (Erwinia carotovora subsp. atroseptica).